Here is a 476-residue protein sequence, read N- to C-terminus: Tryptophan--tRNA ligase, cytoplasmic (476 aa).

Positions 1-117 (MADMSNGEQG…LIVRFGSSKI (117 aa)) are dispensable to the catalytic activity. One can recognise a WHEP-TRS domain in the interval 13–69 (SPLELFHSIAAQGELVRDLKARNAAKDEIDSAVKMLLSLKTSYKAATGEDYKVDCPP). The interval 63 to 83 (YKVDCPPGDPAPESGEGLDAT) is disordered. Residue lysine 159 is modified to N6-succinyllysine. The 'HIGH' region signature appears at 169–178 (PSSEAMHVGH). The 'KMSKS' region motif lies at 354 to 358 (KMSAS). Serine 356 is modified (phosphoserine).

The protein belongs to the class-I aminoacyl-tRNA synthetase family. Homodimer. Interacts with oxidized form of GAPDH. Proteolytic cleavage generates 2 forms; T1-TrpRS and T2-TrpRS.

The protein localises to the cytoplasm. It carries out the reaction tRNA(Trp) + L-tryptophan + ATP = L-tryptophyl-tRNA(Trp) + AMP + diphosphate + H(+). T1-TrpRS has aminoacylation activity while T2-TrpRS lacks it. T1-TrpRS and T2-TrpRS possess angiostatic activity. T2-TrpRS inhibits fluid shear stress-activated responses of endothelial cells. Regulates ERK, Akt, and eNOS activation pathways that are associated with angiogenesis, cytoskeletal reorganization and shear stress-responsive gene expression. This Bos taurus (Bovine) protein is Tryptophan--tRNA ligase, cytoplasmic (WARS1).